The following is a 383-amino-acid chain: Smad nuclear-interacting protein 1 (383 aa).

Residues 1 to 10 are compositionally biased toward basic and acidic residues; it reads MKAGKSERER. A disordered region spans residues 1–209; it reads MKAGKSERER…NRSKEVPVKE (209 aa). Ser-18 carries the post-translational modification Phosphoserine. A Glycyl lysine isopeptide (Lys-Gly) (interchain with G-Cter in SUMO); alternate cross-link involves residue Lys-28. Lys-28 participates in a covalent cross-link: Glycyl lysine isopeptide (Lys-Gly) (interchain with G-Cter in SUMO1); alternate. Lys-28 participates in a covalent cross-link: Glycyl lysine isopeptide (Lys-Gly) (interchain with G-Cter in SUMO2); alternate. Residues 28–43 are compositionally biased toward basic and acidic residues; sequence KQERLSPEPVAHRRPD. Phosphoserine occurs at positions 33, 48, and 50. The span at 44–56 shows a compositional bias: low complexity; sequence APAASLSPPAAEP. Over residues 59-90 the composition is skewed to basic residues; that stretch reads SGHRGSRARSPAKKKSKSSGRRSKSPRTKRSQ. At Ser-91 the chain carries Phosphoserine. Composition is skewed to basic and acidic residues over residues 99-134 and 143-159; these read VKQEREDHPRRGREDRQHREPSEQEHRRARNSERDR and RSSDERPVSGQDRDRDS. Residue Lys-100 forms a Glycyl lysine isopeptide (Lys-Gly) (interchain with G-Cter in SUMO2) linkage. Ser-145 carries the post-translational modification Phosphoserine. Residues 153–194 adopt a coiled-coil conformation; it reads QDRDRDSQNLQAQEEERDFHNARRREHRQQNESAGSEAQEVI. A Glycyl lysine isopeptide (Lys-Gly) (interchain with G-Cter in SUMO2) cross-link involves residue Lys-210. Residues 268–331 enclose the FHA domain; that stretch reads YLLGRHRRIA…NGTFLNNKRI (64 aa). The segment covering 359-369 has biased composition (basic and acidic residues); the sequence is ESSDTSELDRK. The segment at 359–383 is disordered; sequence ESSDTSELDRKEDEDDEEEEMVSDS. Positions 370 to 383 are enriched in acidic residues; sequence EDEDDEEEEMVSDS. Ser-381 carries the phosphoserine modification.

As to quaternary structure, component of activated spliceosome complexes. Binds SMAD4 and CREBBP/EP300. Component of the minor spliceosome, which splices U12-type introns. Binds the SMAD1/OAZ1/PSMB4 complex. Interacts with DROSHA and SMARCA4. Component of the SNARP complex which consists at least of SNIP1, SNW1, THRAP3, BCLAF1 and PNN. Degraded by the proteasome upon binding to the SMAD1/OAZ1/PSMB4 complex.

The protein resides in the nucleus. In terms of biological role, required for pre-mRNA splicing as component of the spliceosome. As a component of the minor spliceosome, involved in the splicing of U12-type introns in pre-mRNAs. Down-regulates NF-kappa-B signaling by competing with RELA for CREBBP/EP300 binding. Involved in the microRNA (miRNA) biogenesis. May be involved in cyclin-D1/CCND1 mRNA stability through the SNARP complex which associates with both the 3'end of the CCND1 gene and its mRNA. This Mus musculus (Mouse) protein is Smad nuclear-interacting protein 1 (Snip1).